The sequence spans 187 residues: Frataxin, mitochondrial (187 aa).

It belongs to the frataxin family. In terms of assembly, monomer. Oligomer. Interacts with NIFS1.

The protein resides in the mitochondrion. The enzyme catalyses 4 Fe(2+) + O2 + 4 H(+) = 4 Fe(3+) + 2 H2O. In terms of biological role, promotes the biosynthesis of heme as well as the assembly and repair of iron-sulfur clusters by delivering Fe(2+) to proteins involved in these pathways. May play a role in the protection against iron-catalyzed oxidative stress through its ability to catalyze the oxidation of Fe(2+) to Fe(3+). May be able to store large amounts of the metal in the form of a ferrihydrite mineral by oligomerization. Binds to the mitochondrial cysteine desulfurase NIFS1 and increases its activity. The chain is Frataxin, mitochondrial (FH) from Arabidopsis thaliana (Mouse-ear cress).